The chain runs to 993 residues: Vinculin (993 aa).

2 tandem repeats follow at residues 258-364 (DSDN…TKEI) and 373-480 (TNTQ…ELVD). Residues 258–480 (DSDNVTVMRK…LRNKLRELVD (223 aa)) form a 2 X repeats region. The interval 730–797 (ITGAGGSRPP…PPPETDDEEE (68 aa)) is disordered. Over residues 758 to 768 (VHDRIYIREDI) the composition is skewed to basic and acidic residues. A compositionally biased stretch (pro residues) spans 769-790 (PTPPRPPPPVEISPPPRPPPPP).

It belongs to the vinculin/alpha-catenin family. As to quaternary structure, exhibits self-association properties.

It localises to the cytoplasm. It is found in the cytoskeleton. Its subcellular location is the cell junction. The protein resides in the adherens junction. The protein localises to the cell membrane. In terms of biological role, involved in cell adhesion. May be involved in the attachment of the actin-based microfilaments to the plasma membrane. The chain is Vinculin from Brugia malayi (Filarial nematode worm).